A 323-amino-acid polypeptide reads, in one-letter code: MFEQEAWQPSAPIKTLFTRAKIIREIRKFFTERGLLEVETPVLSEFGVTDVHLSTFNTEFIAPIGENSKTLWLMTSPEYHMKRLLAAGSGAIFQICRVFRNEEAGSRHNPEFTMLEWYRPHFDMYRLINEVDDLLQQILDCEPAESFSYQFVFQQYVGLDPLSAPRAELVAKAREHHFMCDENEERDTLLEFLFSTVVEPQIGQTRPAVIYHFPASQAALAQISSEDHRVAERFEFYFKGLELANGFNELTDANEQLIRFERDNRQREKMGLPQRAIDKRLLAALEAGMPNCAGVALGVDRLLMAALNANRIEEVMAFGVNNA.

Residue 76 to 78 participates in substrate binding; it reads SPE. ATP is bound by residues 100–102 and asparagine 109; that span reads RNE. Tyrosine 118 serves as a coordination point for substrate. Position 242 to 243 (242 to 243) interacts with ATP; sequence EL. Glutamate 249 contacts substrate. Position 298 (glycine 298) interacts with ATP.

This sequence belongs to the class-II aminoacyl-tRNA synthetase family. EpmA subfamily. In terms of assembly, homodimer.

The enzyme catalyses D-beta-lysine + L-lysyl-[protein] + ATP = N(6)-((3R)-3,6-diaminohexanoyl)-L-lysyl-[protein] + AMP + diphosphate + H(+). Its function is as follows. With EpmB is involved in the beta-lysylation step of the post-translational modification of translation elongation factor P (EF-P). Catalyzes the ATP-dependent activation of (R)-beta-lysine produced by EpmB, forming a lysyl-adenylate, from which the beta-lysyl moiety is then transferred to the epsilon-amino group of a conserved specific lysine residue in EF-P. The protein is Elongation factor P--(R)-beta-lysine ligase of Mannheimia succiniciproducens (strain KCTC 0769BP / MBEL55E).